The following is a 391-amino-acid chain: Multidrug resistance protein MdtL (391 aa).

12 helical membrane passes run 4 to 24 (FLIC…MYLV), 42 to 62 (IAFS…GKVA), 69 to 89 (PVAI…SLAE), 93 to 113 (LFLA…VVAF), 131 to 151 (LLNG…HLIM), 158 to 178 (SLFW…LFIL), 203 to 222 (FFLS…LTFV), 245 to 265 (ALTA…LGIF), 269 to 289 (TLMI…AVSP), 293 to 313 (VSLF…GVAM), 331 to 351 (LGIA…VVGI), and 356 to 376 (MLIG…MFVA).

It belongs to the major facilitator superfamily. DHA1 family. MdtL (TC 2.A.1.2.22) subfamily.

It is found in the cell inner membrane. Confers resistance to chloramphenicol. The chain is Multidrug resistance protein MdtL from Escherichia coli O127:H6 (strain E2348/69 / EPEC).